A 481-amino-acid polypeptide reads, in one-letter code: Cis-aconitate decarboxylase (481 aa).

Residues 462–481 are disordered; it reads SPPEVASNSPACNNSITNLS. Residues 467 to 481 show a composition bias toward polar residues; it reads ASNSPACNNSITNLS.

The protein belongs to the PrpD family. In terms of assembly, homodimer. In terms of tissue distribution, expressed in LPS-tolerized macrophages (at protein level). Expressed in peripheral blood mononuclear cells (PBMCs), microglia and macrophage cells.

The protein localises to the mitochondrion. The enzyme catalyses cis-aconitate + H(+) = itaconate + CO2. Cis-aconitate decarboxylase that catalyzes production of itaconate and is involved in the inhibition of the inflammatory response. Acts as a negative regulator of the Toll-like receptors (TLRs)-mediated inflammatory innate response by stimulating the tumor necrosis factor alpha-induced protein TNFAIP3 expression via reactive oxygen species (ROS) in LPS-tolerized macrophages. Involved in antimicrobial response of innate immune cells; ACOD1-mediated itaconic acid production contributes to the antimicrobial activity of macrophages by generating itaconate, leading to alkylation of proteins, such as TFEB. Involved in antiviral response following infection by flavivirus in neurons: ACOD1-mediated itaconate production inhibits the activity of succinate dehydrogenase, generating a metabolic state in neurons that suppresses replication of viral genomes. Plays a role in the embryo implantation. The chain is Cis-aconitate decarboxylase from Homo sapiens (Human).